We begin with the raw amino-acid sequence, 141 residues long: HTH-type transcriptional repressor NsrR (141 aa).

Residues 2–129 form the HTH rrf2-type domain; that stretch reads QLTSFTDYAL…DECTIESLLS (128 aa). The H-T-H motif DNA-binding region spans 28–51; the sequence is ITEVTDLFGVSRNHMVKVINRLGQ. [2Fe-2S] cluster-binding residues include Cys91, Cys96, and Cys102.

[2Fe-2S] cluster serves as cofactor.

Its function is as follows. Nitric oxide-sensitive repressor of genes involved in protecting the cell against nitrosative stress. May require iron for activity. This chain is HTH-type transcriptional repressor NsrR, found in Vibrio parahaemolyticus serotype O3:K6 (strain RIMD 2210633).